The chain runs to 443 residues: Trigger factor (443 aa).

Residues 161–246 form the PPIase FKBP-type domain; it reads ADGVTITYHG…VISVTAPRLP (86 aa).

Belongs to the FKBP-type PPIase family. Tig subfamily.

The protein resides in the cytoplasm. The catalysed reaction is [protein]-peptidylproline (omega=180) = [protein]-peptidylproline (omega=0). Involved in protein export. Acts as a chaperone by maintaining the newly synthesized protein in an open conformation. Functions as a peptidyl-prolyl cis-trans isomerase. The protein is Trigger factor of Nitrosococcus oceani (strain ATCC 19707 / BCRC 17464 / JCM 30415 / NCIMB 11848 / C-107).